The chain runs to 187 residues: UPF0398 protein SH1465 (187 aa).

The protein belongs to the UPF0398 family.

This is UPF0398 protein SH1465 from Staphylococcus haemolyticus (strain JCSC1435).